We begin with the raw amino-acid sequence, 313 residues long: Ribosomal RNA small subunit methyltransferase H (313 aa).

S-adenosyl-L-methionine contacts are provided by residues 51-53 (GGH), D71, F98, D119, and Q126. Residues 293-313 (EEQRANPRSRSARLRVAERVS) form a disordered region.

This sequence belongs to the methyltransferase superfamily. RsmH family.

It localises to the cytoplasm. It carries out the reaction cytidine(1402) in 16S rRNA + S-adenosyl-L-methionine = N(4)-methylcytidine(1402) in 16S rRNA + S-adenosyl-L-homocysteine + H(+). Specifically methylates the N4 position of cytidine in position 1402 (C1402) of 16S rRNA. The protein is Ribosomal RNA small subunit methyltransferase H of Roseiflexus sp. (strain RS-1).